The chain runs to 327 residues: ATP-dependent 6-phosphofructokinase (327 aa).

ATP is bound by residues glycine 12, 73–74 (RL), and 103–106 (GDGS). Aspartate 104 contacts Mg(2+). Position 126–128 (126–128 (TID)) interacts with substrate. Catalysis depends on aspartate 128, which acts as the Proton acceptor. Arginine 155 serves as a coordination point for ADP. Substrate-binding positions include arginine 163 and 170 to 172 (MGH). ADP-binding positions include 186–188 (GAD) and 214–216 (KRS). Substrate is bound by residues glutamate 223, arginine 245, and 251–254 (HTQR).

The protein belongs to the phosphofructokinase type A (PFKA) family. ATP-dependent PFK group I subfamily. Prokaryotic clade 'B1' sub-subfamily. Homotetramer. Mg(2+) is required as a cofactor.

It localises to the cytoplasm. It carries out the reaction beta-D-fructose 6-phosphate + ATP = beta-D-fructose 1,6-bisphosphate + ADP + H(+). It functions in the pathway carbohydrate degradation; glycolysis; D-glyceraldehyde 3-phosphate and glycerone phosphate from D-glucose: step 3/4. With respect to regulation, allosterically activated by ADP and other diphosphonucleosides, and allosterically inhibited by phosphoenolpyruvate. Catalyzes the phosphorylation of D-fructose 6-phosphate to fructose 1,6-bisphosphate by ATP, the first committing step of glycolysis. This chain is ATP-dependent 6-phosphofructokinase, found in Spiroplasma citri.